The sequence spans 464 residues: V-type ATP synthase beta chain (464 aa).

The protein belongs to the ATPase alpha/beta chains family.

Functionally, produces ATP from ADP in the presence of a proton gradient across the membrane. The V-type beta chain is a regulatory subunit. This chain is V-type ATP synthase beta chain, found in Streptococcus gordonii (strain Challis / ATCC 35105 / BCRC 15272 / CH1 / DL1 / V288).